The following is a 197-amino-acid chain: Na(+)-translocating NADH-quinone reductase subunit E (197 aa).

The next 6 helical transmembrane spans lie at 11–31, 35–55, 76–96, 108–128, 139–159, and 175–195; these read SVFI…FLAV, VSTA…SVPA, FLKF…LEMF, LGIY…VSFM, VVYG…LAGI, and LGIT…FSGI.

It belongs to the NqrDE/RnfAE family. In terms of assembly, composed of six subunits; NqrA, NqrB, NqrC, NqrD, NqrE and NqrF.

The protein localises to the cell inner membrane. It carries out the reaction a ubiquinone + n Na(+)(in) + NADH + H(+) = a ubiquinol + n Na(+)(out) + NAD(+). Its function is as follows. NQR complex catalyzes the reduction of ubiquinone-1 to ubiquinol by two successive reactions, coupled with the transport of Na(+) ions from the cytoplasm to the periplasm. NqrA to NqrE are probably involved in the second step, the conversion of ubisemiquinone to ubiquinol. This is Na(+)-translocating NADH-quinone reductase subunit E from Neisseria gonorrhoeae (strain ATCC 700825 / FA 1090).